A 940-amino-acid chain; its full sequence is Glutamate receptor 2.9 (940 aa).

The signal sequence occupies residues 1-23 (MKTNNTFLSYFVCGFLLMGVGLG). At 24 to 566 (QNQTSEIKVG…DTWVFLEPWS (543 aa)) the chain is on the extracellular side. N-linked (GlcNAc...) asparagine glycans are attached at residues Asn-25, Asn-39, Asn-115, Asn-338, Asn-345, and Asn-528. A helical membrane pass occupies residues 567-587 (LELWVTTGCFFVFIGFVVWLF). The Cytoplasmic segment spans residues 588–596 (EHRVNTDFR). A helical transmembrane segment spans residues 597–617 (GPPQYQIGTSLWFSFSTMVFA). The Cytoplasmic portion of the chain corresponds to 618–628 (HRENVVSNLAR). A helical transmembrane segment spans residues 629–649 (FVVVVWCFVVLVLTQSYTASL). At 650 to 811 (TSFLTVQSLQ…NRLNLSSFLG (162 aa)) the chain is on the extracellular side. N-linked (GlcNAc...) asparagine glycosylation is found at Asn-771, Asn-776, and Asn-805. The helical transmembrane segment at 812–832 (LFLIAGTAISFSLLVFVALFL) threads the bilayer. Topologically, residues 833–940 (YEHRHTLGDD…ESDIECRVEQ (108 aa)) are cytoplasmic. Disordered regions lie at residues 876-900 (ISSPMTHKTPSPSTVQITPWPQSPS) and 914-940 (PSEERFTTQPIIHHEDGESDIECRVEQ).

Belongs to the glutamate-gated ion channel (TC 1.A.10.1) family. May form heteromers. Expressed predominantly in roots.

The protein localises to the membrane. In terms of biological role, glutamate-gated receptor that probably acts as a non-selective cation channel. May be involved in light-signal transduction and calcium homeostasis via the regulation of calcium influx into cells. The polypeptide is Glutamate receptor 2.9 (GLR2.9) (Arabidopsis thaliana (Mouse-ear cress)).